Reading from the N-terminus, the 161-residue chain is Ubiquitin D (161 aa).

Ubiquitin-like domains lie at 3 to 77 (SCVC…LKVV) and 86 to 159 (LSLV…AHCI).

It belongs to the ubiquitin D family. As to quaternary structure, interacts directly with the 26S proteasome. Interacts with NUB1; this interaction facilitates the linking of UBD-conjugated target protein to the proteasome complex and accelerates its own degradation and that of its conjugates. Interacts (via ubiquitin-like 1 domain) with the spindle checkpoint protein MAD2L1 during mitosis. Present in aggresomes of proteasome inhibited cells. Interacts with HDAC6 under proteasome impairment conditions. Forms a thioester with UBA6 in cells stimulated with tumor necrosis factor-alpha (TNFa) and interferon-gamma (IFNg). Interacts with SQSTM1 and TP53/p53. Post-translationally, can be acetylated.

The protein resides in the nucleus. It is found in the cytoplasm. Its function is as follows. Ubiquitin-like protein modifier which can be covalently attached to target proteins and subsequently leads to their degradation by the 26S proteasome, in a NUB1-dependent manner. Conjugation to the target protein is activated by UBA6 via adenylation of its C-terminal glycine. Probably functions as a survival factor. Promotes the expression of the proteasome subunit beta type-9 (PSMB9/LMP2). Regulates TNF-alpha-induced and LPS-mediated activation of the central mediator of innate immunity NF-kappa-B by promoting TNF-alpha-mediated proteasomal degradation of ubiquitinated-I-kappa-B-alpha. Required for TNF-alpha-induced p65 nuclear translocation in renal tubular epithelial cells (RTECs). May be involved in dendritic cell (DC) maturation, the process by which immature dendritic cells differentiate into fully competent antigen-presenting cells that initiate T-cell responses. Mediates mitotic non-disjunction and chromosome instability, in long-term in vitro culture and cancers, by abbreviating mitotic phase and impairing the kinetochore localization of MAD2L1 during the prometaphase stage of the cell cycle. May be involved in the formation of aggresomes when proteasome is saturated or impaired. Mediates apoptosis in a caspase-dependent manner, especially in renal epithelium and tubular cells during renal diseases. The polypeptide is Ubiquitin D (Ubd) (Rattus norvegicus (Rat)).